A 540-amino-acid polypeptide reads, in one-letter code: Bifunctional pantoate ligase/cytidylate kinase (540 aa).

Residues 1–280 (MQWLRTVAAL…VGQTRLIDNL (280 aa)) are pantoate--beta-alanine ligase. Residue 28 to 35 (MGSLHEGH) coordinates ATP. The active-site Proton donor is the His35. Residue Gln59 participates in (R)-pantoate binding. Gln59 contributes to the beta-alanine binding site. 150-153 (GQKD) contacts ATP. Residue Gln156 participates in (R)-pantoate binding. ATP-binding positions include Val179 and 187 to 190 (YSSR). Residues 281-540 (LLSPEGVDPL…RSGAAHFDII (260 aa)) form a cytidylate kinase region. Positions 288 to 307 (DPLPQEQQSAVPPSPKRGRR) are disordered.

In the N-terminal section; belongs to the pantothenate synthetase family. This sequence in the C-terminal section; belongs to the cytidylate kinase family. Type 1 subfamily.

The protein localises to the cytoplasm. The enzyme catalyses (R)-pantoate + beta-alanine + ATP = (R)-pantothenate + AMP + diphosphate + H(+). It catalyses the reaction CMP + ATP = CDP + ADP. The catalysed reaction is dCMP + ATP = dCDP + ADP. The protein operates within cofactor biosynthesis; (R)-pantothenate biosynthesis; (R)-pantothenate from (R)-pantoate and beta-alanine: step 1/1. Its function is as follows. Catalyzes the condensation of pantoate with beta-alanine in an ATP-dependent reaction via a pantoyl-adenylate intermediate. Functionally, catalyzes the transfer of a phosphate group from ATP to either CMP or dCMP to form CDP or dCDP and ADP, respectively. The polypeptide is Bifunctional pantoate ligase/cytidylate kinase (Synechococcus sp. (strain JA-3-3Ab) (Cyanobacteria bacterium Yellowstone A-Prime)).